Here is a 90-residue protein sequence, read N- to C-terminus: Sec-independent protein translocase protein TatA (90 aa).

The helical transmembrane segment at 1–21 (MGLPGGWELVLIVGVLVLLFG) threads the bilayer. Residues 42–60 (EARGMKEDEEAAKREKQAK) show a composition bias toward basic and acidic residues. A disordered region spans residues 42–90 (EARGMKEDEEAAKREKQAKSEPQQLTAGESSAPTVASPVEETQRNDSKK). Polar residues predominate over residues 61–75 (SEPQQLTAGESSAPT).

The protein belongs to the TatA/E family. In terms of assembly, the Tat system comprises two distinct complexes: a TatABC complex, containing multiple copies of TatA, TatB and TatC subunits, and a separate TatA complex, containing only TatA subunits. Substrates initially bind to the TatABC complex, which probably triggers association of the separate TatA complex to form the active translocon.

The protein resides in the cell membrane. In terms of biological role, part of the twin-arginine translocation (Tat) system that transports large folded proteins containing a characteristic twin-arginine motif in their signal peptide across membranes. TatA could form the protein-conducting channel of the Tat system. This chain is Sec-independent protein translocase protein TatA, found in Saccharopolyspora erythraea (strain ATCC 11635 / DSM 40517 / JCM 4748 / NBRC 13426 / NCIMB 8594 / NRRL 2338).